A 169-amino-acid chain; its full sequence is Ribosome maturation factor RimM (169 aa).

The 74-residue stretch at 94-167 (ENEFYFHEII…KITIEVMEGL (74 aa)) folds into the PRC barrel domain.

The protein belongs to the RimM family. As to quaternary structure, binds ribosomal protein uS19.

It localises to the cytoplasm. In terms of biological role, an accessory protein needed during the final step in the assembly of 30S ribosomal subunit, possibly for assembly of the head region. Essential for efficient processing of 16S rRNA. May be needed both before and after RbfA during the maturation of 16S rRNA. It has affinity for free ribosomal 30S subunits but not for 70S ribosomes. This chain is Ribosome maturation factor RimM, found in Listeria monocytogenes serotype 4b (strain F2365).